Reading from the N-terminus, the 154-residue chain is Ribonuclease 8 (154 aa).

The signal sequence occupies residues 1–27 (MAPARAGCCALLLLLLGLWVAEIPVSA). The Proton acceptor role is filled by His-42. Intrachain disulfides connect Cys-64/Cys-118, Cys-82/Cys-133, and Cys-89/Cys-96. Residues 65 to 69 (KDLNT) and Lys-90 each bind substrate. The Proton donor role is filled by His-149.

This sequence belongs to the pancreatic ribonuclease family.

The protein resides in the secreted. Has a low ribonuclease activity. This is Ribonuclease 8 (RNASE8) from Pongo pygmaeus (Bornean orangutan).